Reading from the N-terminus, the 174-residue chain is MESKEFDDDKIKIISMTPKSEKSDKIVMQIVEEFINSFPDDRYKFRVLLKVAELICKNGLCNEAFLILDKIPDSYYKSSALYKMADILYRNKEHDRLIQIAEKIPDDYKKSEVLLKVVELLCESGKYDEAINIAEKIPDNYYKSEALFKIAETLSNKGYYDKAVEIAEKIPDNF.

This is an uncharacterized protein from Methanocaldococcus jannaschii (strain ATCC 43067 / DSM 2661 / JAL-1 / JCM 10045 / NBRC 100440) (Methanococcus jannaschii).